The following is a 100-amino-acid chain: Protein translation factor SUI1 homolog (100 aa).

Belongs to the SUI1 family.

The chain is Protein translation factor SUI1 homolog from Thermoplasma volcanium (strain ATCC 51530 / DSM 4299 / JCM 9571 / NBRC 15438 / GSS1).